Here is a 103-residue protein sequence, read N- to C-terminus: Large ribosomal subunit protein uL24 (103 aa).

The protein belongs to the universal ribosomal protein uL24 family. As to quaternary structure, part of the 50S ribosomal subunit.

Its function is as follows. One of two assembly initiator proteins, it binds directly to the 5'-end of the 23S rRNA, where it nucleates assembly of the 50S subunit. One of the proteins that surrounds the polypeptide exit tunnel on the outside of the subunit. This is Large ribosomal subunit protein uL24 from Roseobacter denitrificans (strain ATCC 33942 / OCh 114) (Erythrobacter sp. (strain OCh 114)).